The sequence spans 498 residues: Isoflavone 2'-hydroxylase (498 aa).

A helical membrane pass occupies residues 3–23 (ILSYLCYSLFYLSIFFIIRLL). Cys-436 is a heme binding site.

The protein belongs to the cytochrome P450 family. Heme serves as cofactor. As to expression, expressed constitutively in roots, but present at very low levels in uninfected stems and leaves.

It is found in the endoplasmic reticulum membrane. It catalyses the reaction formononetin + reduced [NADPH--hemoprotein reductase] + O2 = 2'-hydroxyformononetin + oxidized [NADPH--hemoprotein reductase] + H2O + H(+). In terms of biological role, involved in the biosynthesis of the pterocarpin phytoalexins. Acts on isoflavones with a 4'-methoxy group on the B-ring, such as formononetin and biochanin A, and on pseudobaptigenin. Has a low activity with daidzein and genistein and no activity with the 7-O-methylated isoflavonoids isoformononetin and prunetin. In Medicago truncatula (Barrel medic), this protein is Isoflavone 2'-hydroxylase.